Here is a 31-residue protein sequence, read N- to C-terminus: L-amino-acid oxidase (31 aa).

The protein belongs to the flavin monoamine oxidase family. FIG1 subfamily. Homodimer; non-covalently linked. Requires FAD as cofactor. Post-translationally, N-glycosylated. In terms of tissue distribution, expressed by the venom gland.

The protein resides in the secreted. It carries out the reaction an L-alpha-amino acid + O2 + H2O = a 2-oxocarboxylate + H2O2 + NH4(+). The catalysed reaction is L-leucine + O2 + H2O = 4-methyl-2-oxopentanoate + H2O2 + NH4(+). The enzyme catalyses L-phenylalanine + O2 + H2O = 3-phenylpyruvate + H2O2 + NH4(+). It catalyses the reaction L-histidine + O2 + H2O = 3-(imidazol-5-yl)pyruvate + H2O2 + NH4(+). Functionally, catalyzes an oxidative deamination of predominantly hydrophobic and aromatic L-amino acids, thus producing hydrogen peroxide that may contribute to the diverse toxic effects of this enzyme. Is moderately active on L-Leu, L-His, and L-Phe, and very weakly active on L-Thr, and L-Cys. Exhibits diverse biological activities, such as hemorrhage, hemolysis, edema, antibacterial and antiparasitic activities, as well as regulation of platelet aggregation. Its effect on platelets is controversial, since it either induces aggregation or inhibits agonist-induced aggregation. These different effects are probably due to different experimental conditions. Inhibits growth of B.subtilis strain ATCC 6633 (MIC=32 uM), E.faecalis strain ATCC 12953 (MIC=32 uM), S.aureus strain ATCC 29213 (MIC=32 uM), S.pyogenes strain ATCC 19615 (MIC=8 uM), E.coli strain ATCC 8739 (MIC=4 uM), K.pneumoniae strain ATCC 13885 (MIC=2 uM), P.mirabilis strain ATCC 25933 (MIC=2 uM), P.aeruginosa strain ATCC 15442 (MIC=8 uM) and S.typhimurium strain ATCC 14028 (MIC=8 uM). The chain is L-amino-acid oxidase from Bothrops mattogrossensis (Pitviper).